The chain runs to 185 residues: Protein LPA2 (185 aa).

A chloroplast-targeting transit peptide spans 1 to 46; the sequence is MALQIHSPCSFSTRPYHLFFTTRNPRFAIKCQNSQIESDTTEDPSR. Residues 35–105 are disordered; that stretch reads QIESDTTEDP…VFMSEEGAAK (71 aa). Positions 47-75 are enriched in low complexity; sequence SKNSSSSGVGFGSPASSSSPAKKLSAATS. Residues 83–92 show a composition bias toward basic and acidic residues; that stretch reads KREVNRRAPV. Transmembrane regions (helical) follow at residues 115 to 135 and 152 to 172; these read AFLLTWLGLGIVILIEGIILA and VYPVFTPSVVLFVAGTTAYGV.

The protein localises to the plastid. Its subcellular location is the chloroplast membrane. The chain is Protein LPA2 from Arabidopsis thaliana (Mouse-ear cress).